Consider the following 406-residue polypeptide: Glycosyltransferase GlyE (406 aa).

The GT8 domain stretch occupies residues 3–265 (NTKRAVVFAG…SVILNEWFSK (263 aa)). UDP contacts are provided by residues 11–16 (AGDYAY) and 106–107 (DS). Residues Asp-106, Asp-108, and His-227 each coordinate Mn(2+). A UDP-binding site is contributed by 227-233 (HYISQDK).

It in the N-terminal section; belongs to the glycosyltransferase 8 family. The cofactor is Mn(2+).

Its pathway is protein modification; protein glycosylation. Involved in the polymorphic O-glycosylation of the serine-rich repeat protein PsrP. Catalyzes the third step in glycosylation of PsrP in this bacteria. Transfers galactose from UDP-galactose to the terminal glucose moiety of already-glycosylated PsrP (using the short substrate PsrP-GlcNAc-Glc). Has a very marked preference for PsrP substrate that has already been modified by GlcNAc and glucose. Has hydrolytic activity against UDP-galactose but none against UDP-glucose. In terms of biological role, also catalyzes the fourth step in glycosylation of PsrP in this bacteria. Can transfer the sugar from UDP-galactose to the terminal sugar moiety of PsrP-GlcNAc-Glc-Glc and of PsrP-GlcNAc-Glc-Gal. This Streptococcus pneumoniae serotype 4 (strain ATCC BAA-334 / TIGR4) protein is Glycosyltransferase GlyE.